The following is a 137-amino-acid chain: uncharacterized protein (137 aa).

The helical transmembrane segment at 20–42 (TVLAFKGEGALALAGLLVMAAVA) threads the bilayer.

The protein resides in the host membrane. This is an uncharacterized protein from Dryophytes versicolor (chameleon treefrog).